Here is a 238-residue protein sequence, read N- to C-terminus: Protein E6 (238 aa).

Over residues 40–51 (KETTTREQKHET) the composition is skewed to basic and acidic residues. Disordered stretches follow at residues 40–64 (KETT…EEQE) and 210–238 (EFNE…EFEP). Residues 227-238 (EEFEESEEEFEP) show a composition bias toward acidic residues.

As to expression, it is predominantly expressed in fiber cells.

The protein localises to the secreted. The protein resides in the cell wall. This Gossypium hirsutum (Upland cotton) protein is Protein E6 (E6).